A 208-amino-acid chain; its full sequence is Dephospho-CoA kinase (208 aa).

One can recognise a DPCK domain in the interval 5-201 (IVALTGGIGS…QRYLALAASA (197 aa)). 13-18 (GSGKST) is a binding site for ATP.

This sequence belongs to the CoaE family.

The protein localises to the cytoplasm. The catalysed reaction is 3'-dephospho-CoA + ATP = ADP + CoA + H(+). It functions in the pathway cofactor biosynthesis; coenzyme A biosynthesis; CoA from (R)-pantothenate: step 5/5. In terms of biological role, catalyzes the phosphorylation of the 3'-hydroxyl group of dephosphocoenzyme A to form coenzyme A. The protein is Dephospho-CoA kinase of Sodalis glossinidius (strain morsitans).